The primary structure comprises 242 residues: MRHVAVIIPARYGASRFPGKPLADLAGKPLIAHVVERAKRARGVDVVAVATDDDRIARAVRDAGGEAILTGPAATGTDRVAEAARKLAPRPEIVVNLQGDEPLIEPEAIEAVIGAMEGGVRMATLARPLAAGELERTQVVKVVTRASGDALYFSRAPIPHRRAGGESPLARAHVGIYAFTAAFLETFTALAPGRLEGEEALEQLRALEHGYDIRVADTGYRGFGIDTPDDLERARALLAAGA.

It belongs to the KdsB family.

Its subcellular location is the cytoplasm. The enzyme catalyses 3-deoxy-alpha-D-manno-oct-2-ulosonate + CTP = CMP-3-deoxy-beta-D-manno-octulosonate + diphosphate. The protein operates within nucleotide-sugar biosynthesis; CMP-3-deoxy-D-manno-octulosonate biosynthesis; CMP-3-deoxy-D-manno-octulosonate from 3-deoxy-D-manno-octulosonate and CTP: step 1/1. It participates in bacterial outer membrane biogenesis; lipopolysaccharide biosynthesis. In terms of biological role, activates KDO (a required 8-carbon sugar) for incorporation into bacterial lipopolysaccharide in Gram-negative bacteria. The sequence is that of 3-deoxy-manno-octulosonate cytidylyltransferase from Anaeromyxobacter sp. (strain K).